The primary structure comprises 424 residues: MQSLTPSSGVNLKSIIRKTSLPPGQTRFITGRVIKCGYQVDSANTVNTAGAPASYNSGHVGASRADWQSSCAILASKVVSQQPDTEKTGGAGNITAVNGHKTLDLVSIDNLPKALTITDLSPAPMHGSTLRVAYQGVPGAYSEAAAGKAYPNCEAIPCDQFEVAFQAVELWIADRAVLPVENSLGGSIHRNYDLLLRHRLHIVGEVQLPVHHCLLALPGVRKEYLTRVISHPQALAQCELTITKLGLNVAREAVDDTAGAAEYIAANNLRDTAAVASARAAELYGLQILAEGIQDDSSNVTRFVMLAREPIIPRMDRPFKTSIVFAHEGTGVLFKVLSAFAFRNISLTKIESRPHRNRPIRLVDDANVGTAKHFEYMFYVDFDASMADVRAQNALAEVQEFTSFLRVLGSYPMDMTPCCPSRDE.

A chloroplast-targeting transit peptide spans 1-52; sequence MQSLTPSSGVNLKSIIRKTSLPPGQTRFITGRVIKCGYQVDSANTVNTAGAP. Positions 131–308 constitute a Prephenate dehydratase domain; sequence RVAYQGVPGA…NVTRFVMLAR (178 aa). Positions 321–412 constitute an ACT domain; that stretch reads TSIVFAHEGT…SFLRVLGSYP (92 aa).

Mostly expressed in flowers, especially in petals (corollas and tubes), and, at low levels, in roots, stems, leaves, pistils, stamens, ovaries and sepals.

It is found in the plastid. The protein localises to the chloroplast stroma. The enzyme catalyses L-arogenate + H(+) = L-phenylalanine + CO2 + H2O. Its pathway is amino-acid biosynthesis; L-phenylalanine biosynthesis; L-phenylalanine from L-arogenate: step 1/1. Its function is as follows. Converts L-arogenate produced from the shikimate-chorismate pathway into phenylalanine (Phe). Involved in floral volatile benzenoids and phenylpropanoids (FVBP) production. The chain is Arogenate dehydratase 1 from Petunia hybrida (Petunia).